The primary structure comprises 260 residues: Carbonic anhydrase 3 (260 aa).

At alanine 2 the chain carries N-acetylalanine. The region spanning 3–259 (KEWGYASHNG…INNRVVRASF (257 aa)) is the Alpha-carbonic anhydrase domain. Phosphoserine is present on residues serine 29, serine 43, serine 48, serine 50, and serine 55. Residues 64-67 (KTCR) are involved in proton transfer. Threonine 73 carries the phosphothreonine modification. 3 residues coordinate Zn(2+): histidine 94, histidine 96, and histidine 119. A Phosphotyrosine modification is found at tyrosine 127. Residues threonine 129 and threonine 176 each carry the phosphothreonine modification. Cysteine 182 and cysteine 187 each carry S-glutathionyl cysteine. 198–199 (TT) is a binding site for substrate. Threonine 216 is modified (phosphothreonine). Serine 219 carries the phosphoserine modification.

This sequence belongs to the alpha-carbonic anhydrase family. Zn(2+) serves as cofactor. In terms of processing, S-thiolated both by thiol-disulfide exchange with glutathione disulfide and by oxyradical-initiated S-thiolation with reduced glutathione. S-glutathionylated in hepatocytes under oxidative stress. In terms of tissue distribution, muscle specific.

The protein resides in the cytoplasm. It catalyses the reaction hydrogencarbonate + H(+) = CO2 + H2O. With respect to regulation, activated by proton donors such as imidazole and the dipeptide histidylhistidine. Inhibited by coumarins and sulfonamide derivatives such as acetazolamide. Its function is as follows. Reversible hydration of carbon dioxide. This chain is Carbonic anhydrase 3, found in Homo sapiens (Human).